Here is a 335-residue protein sequence, read N- to C-terminus: Ketol-acid reductoisomerase (NADP(+)) (335 aa).

The region spanning 5 to 185 (SKIYTDKDSN…GATRAGVIPT (181 aa)) is the KARI N-terminal Rossmann domain. NADP(+)-binding positions include 28–31 (YGSQ), serine 56, and 86–89 (DMVQ). Residue histidine 111 is part of the active site. Residue glycine 137 participates in NADP(+) binding. The region spanning 186 to 331 (TFKEETETDL…NQLKDLIQKG (146 aa)) is the KARI C-terminal knotted domain. Positions 194, 198, 230, and 234 each coordinate Mg(2+). Serine 255 contributes to the substrate binding site.

Belongs to the ketol-acid reductoisomerase family. Requires Mg(2+) as cofactor.

The enzyme catalyses (2R)-2,3-dihydroxy-3-methylbutanoate + NADP(+) = (2S)-2-acetolactate + NADPH + H(+). It catalyses the reaction (2R,3R)-2,3-dihydroxy-3-methylpentanoate + NADP(+) = (S)-2-ethyl-2-hydroxy-3-oxobutanoate + NADPH + H(+). The protein operates within amino-acid biosynthesis; L-isoleucine biosynthesis; L-isoleucine from 2-oxobutanoate: step 2/4. It participates in amino-acid biosynthesis; L-valine biosynthesis; L-valine from pyruvate: step 2/4. Functionally, involved in the biosynthesis of branched-chain amino acids (BCAA). Catalyzes an alkyl-migration followed by a ketol-acid reduction of (S)-2-acetolactate (S2AL) to yield (R)-2,3-dihydroxy-isovalerate. In the isomerase reaction, S2AL is rearranged via a Mg-dependent methyl migration to produce 3-hydroxy-3-methyl-2-ketobutyrate (HMKB). In the reductase reaction, this 2-ketoacid undergoes a metal-dependent reduction by NADPH to yield (R)-2,3-dihydroxy-isovalerate. The protein is Ketol-acid reductoisomerase (NADP(+)) of Saccharolobus islandicus (strain Y.G.57.14 / Yellowstone #1) (Sulfolobus islandicus).